The primary structure comprises 1204 residues: MTNFTKEQDQAINDAGKDILVSASAGSGKTTVLVERVLKKILSGTPVSSLLIITFTKAAAREMKERIKQKISDQLEIEPDNQFLRSQLLDVDTANISTIDSFCLDVIRRFYYVIDLDPQFSVLTDETQAELLKERALREIEADYLEGDNQDFQDFYDNFSGDRDAEGARNLLLQLYNTATTEPNYEKFLDNLPTCYEVGDNLIRSNLWQQQIKPLLLKEISDLKAEVEALLAEPEINSSDLVKVKENYDIFSNRLDSFWESLNTDQPYNEIRANLMNCKFEKAVRKSKKWSDESIEVYQDSQDLKLDLNDQLKKIFASFFVVEEKEQIAVLQKSEKIVKTIVAAEKKLIQKFSQLKREQNLIDYSDMEQFAFSILTTDTSNAHIAQEYYQEKFNEILIDEYQDVNALQENIIKAIKKKGQNTLFMVGDVKQSIYGFRQARPDLFLSKYHTYGKDNDSEKIILADNFRSTKRVTKTVNDLFNPILTTNFGGIDYKKEGQLQFGASYYPSDLPTASEYIFTDKKQTQSAYEDQYGDEMDFSEVQMVIARIKQLKAENFQVWDRRTQLKRPLEYSDIAIITRTRSDNLQVMQEFAKADLPLFVTDAQNYFQTFELIMIMNYLRLIDNPQQDIPLVAVMRSPLFNFKEPELAQIRVKTPAGNFYTALTSFASVNSSLGKKCKEFLQQLETLRSFAATHRISELIWSIYEKTHLLEIVTGLPNGQQRRVNLESLYERATSYESAGFKGLYQFISFIERMRKNQKDLAQPLLSDKADNAVKLMTIHASKGLEFPIVFVMGLGHQYQTRDLSGNFTISQNELGLTIKEKNYRIDSLVKSLADVQKRQQMLEEEARILYVGLTRAQQKLILVASVNEIENKRKKWVSELDQKKDIIPLVKKINAQSPLDFLGPKLEQKHEFDQTIRDMTSALEEQDKLYYLKFNLDLEPEKIKDQNEDSQEVNSNVNKVVKELYNFKYPFEDATKTTAYQSVSEIKKAFNDPIDTELENSRLISSSNRYLQPIDETPTFLEGQKFTGAEIGTAMHLVLQYYNYEGNKDQENLDQEIDQLVELGKLNSLMVPHLSKEALNWFVMSDFAKEFWKQPDKLHRESQFSSLVNASELFNDFSDPSAKVLVHGTVDGYFEAKDGLILFDYKTDFVDKTNEEQAIEKIKQKYTGQLRLYEQALNEMNNDKKVIGKYLILLDARKVVPVD.

In terms of domain architecture, UvrD-like helicase ATP-binding spans 2 to 469 (TNFTKEQDQA…IILADNFRST (468 aa)). An ATP-binding site is contributed by 23–30 (ASAGSGKT). One can recognise a UvrD-like helicase C-terminal domain in the interval 497 to 784 (GQLQFGASYY…KLMTIHASKG (288 aa)).

The protein belongs to the helicase family. AddA subfamily. In terms of assembly, heterodimer of AddA and AddB/RexB. Mg(2+) serves as cofactor.

It catalyses the reaction Couples ATP hydrolysis with the unwinding of duplex DNA by translocating in the 3'-5' direction.. It carries out the reaction ATP + H2O = ADP + phosphate + H(+). Functionally, the heterodimer acts as both an ATP-dependent DNA helicase and an ATP-dependent, dual-direction single-stranded exonuclease. Recognizes the chi site generating a DNA molecule suitable for the initiation of homologous recombination. The AddA nuclease domain is required for chi fragment generation; this subunit has the helicase and 3' -&gt; 5' nuclease activities. This chain is ATP-dependent helicase/nuclease subunit A, found in Lactobacillus gasseri (strain ATCC 33323 / DSM 20243 / BCRC 14619 / CIP 102991 / JCM 1131 / KCTC 3163 / NCIMB 11718 / NCTC 13722 / AM63).